A 158-amino-acid polypeptide reads, in one-letter code: Transcription elongation factor GreA (158 aa).

Positions 53 to 73 form a coiled coil; sequence EQQSFVEGRIQEIEGKLSNAQ.

Belongs to the GreA/GreB family.

Functionally, necessary for efficient RNA polymerase transcription elongation past template-encoded arresting sites. The arresting sites in DNA have the property of trapping a certain fraction of elongating RNA polymerases that pass through, resulting in locked ternary complexes. Cleavage of the nascent transcript by cleavage factors such as GreA or GreB allows the resumption of elongation from the new 3'terminus. GreA releases sequences of 2 to 3 nucleotides. The protein is Transcription elongation factor GreA of Alkalilimnicola ehrlichii (strain ATCC BAA-1101 / DSM 17681 / MLHE-1).